The chain runs to 1262 residues: MEDGKPVWAPHPTDGFQMGNIVDIGPDSLTIEPLNQKGKTFLALINQVFPAEEDSKKDVEDNCSLMYLNEATLLHNVKVRYSKDRIYTYVANILIAVNPYFDIPKIYSSDTIKSYQGKSLGTMPPHVFAIADKAFRDMKVLKMSQSIIVSGESGAGKTENTKFVLRYLTESYGTGQDIDDRIVEANPLLEAFGNAKTVRNNNSSRFGKFVEIHFNEKSSVVGGFVSHYLLEKSRICVQGKEERNYHIFYRLCAGASEDIREKLHLSSPDNFRYLNRGCTRFFANKETDKQILQNRKSPEYVKAGSLKDPLLDDHGDFIRMCTAMKKIGLDDEEKLDLFRVVAGVLHLGNIDFEEAGSTSGGCNLKNKSAPSLEYCAELLGLDQDDLRVSLTTRVMLTTAGGTKGTVIKVPLKVEQANNARDALAKTVYSHLFDHVVNRVNQCFPFETSSYFIGVLDIAGFEYFEHNSFEQFCINYCNEKLQQFFNERILKEEQELYQKEGLGVNEVHYVDNQDCIDLIEVKLVGILDILDEENRLPQPSDQHFTSVVHQKHKDHFRLTIPRKSKLAVHRNLRDDEGFIIRHFAGAVCYETTQFVEKNNDALHMSLESLICESRDKFIRALFESSTNNNKDTKQKAGKLSFISVGNKFKTQLNLLLDKLRSTGASFIRCIKPNLKMTSHHFEGAQILSQLQCSGMVSVLDLMQGGFPSRASFHELYNMYKKYMPEKLARLDPRLFCKALFKALGLNEVDYKFGLTKVFFRPGKFAEFDQIMKSDPDHLAELVKRVNLWLVCSRWKKVQWCSLSVIKLKNKIKYRAEACIKMQKTIRMWLCKRRHKPRIDGLVKVGTLKKRLDKFNEVVSALKDGKPEVNRQIKNLEISIDALMAKIKSTMMTREQIQKEYDALVKSSEDLLSALQKKKQQEEEAERLRRIQEEMEKERKRREEDEERRRKEEEERRMKLEMEAKRKQEEEERKKREDDEKRIQAEVEAQLARQREEESQQQAVLAQECRDRELALRIAQNESELISDEAQGDMALRRGPAVQATKAAAGTKKHDLSKWKYAELRDTINTSCDIELLAACREEFHRRLKVYHAWKSKNKKRNTETEQRAPKSVTDYDFAPFLNNSPQQNPAAQLPARQQEIDMKRQQRFFRIPFIRPADQYKDPQNKKKGWWYAHFDGPWIARQMELHPDKPPILLVAGKDDMEMCELNLEETGLTRKRGAEILPRQFEEIWERCGGIQYLQSAIESRQARPTYATAMLQNLLK.

Positions 2–53 (EDGKPVWAPHPTDGFQMGNIVDIGPDSLTIEPLNQKGKTFLALINQVFPAEE) constitute a Myosin N-terminal SH3-like domain. A Myosin motor domain is found at 57–771 (KDVEDNCSLM…KFAEFDQIMK (715 aa)). 151–158 (GESGAGKT) is a binding site for ATP. The residue at position 267 (serine 267) is a Phosphoserine. The segment at 273 to 317 (YLNRGCTRFFANKETDKQILQNRKSPEYVKAGSLKDPLLDDHGDF) is responsible for slow ATPase activity. Residue threonine 405 is modified to Phosphothreonine. Serine 604 bears the Phosphoserine mark. Actin-binding regions lie at residues 651–673 (LNLL…KPNL) and 665–672 (FIRCIKPN). The interval 782–810 (KRVNLWLVCSRWKKVQWCSLSVIKLKNKI) is required for binding calmodulin. Residues 814-834 (AEACIKMQKTIRMWLCKRRHK) form the IQ domain. The segment at 835–916 (PRIDGLVKVG…EDLLSALQKK (82 aa)) is three-helix bundle. The stretch at 864–984 (KPEVNRQIKN…EDDEKRIQAE (121 aa)) forms a coiled coil. The tract at residues 917–984 (KQQEEEAERL…EDDEKRIQAE (68 aa)) is SAH. The disordered stretch occupies residues 933-955 (MEKERKRREEDEERRRKEEEERR). Phosphoserine is present on serine 1025. The segment at 1034-1253 (LRRGPAVQAT…ESRQARPTYA (220 aa)) is interaction with TAX1BP1 and CALCOCO2/NDP52. Residues 1084 to 1086 (RRL) are interaction with OPTN. Serine 1123 is subject to Phosphoserine. Residues 1125–1253 (QQNPAAQLPA…ESRQARPTYA (129 aa)) are interaction with TOM1.

Belongs to the TRAFAC class myosin-kinesin ATPase superfamily. Myosin family. In terms of assembly, homodimer; dimerization seems to implicate the unfolding of the three-helix bundle region creating an additional calmodulin binding site, and cargo binding. Able to function as a monomer under specific conditions in vitro. Forms a complex with CFTR and DAB2 in the apical membrane of epithelial cells. Component of the DISP/DOCK7-induced septin displacement complex, at least composed of DOCK7, LRCH3 and MYO6. Binding to calmodulin through a unique insert, not found in other myosins, located in the neck region between the motor domain and the IQ domain appears to contribute to the directionality reversal. This interaction occurs only if the C-terminal lobe of calmodulin is occupied by calcium. Interaction with F-actin/ACTN1 occurs only at the apical brush border domain of the proximal tubule cells. Interacts with DAB2. In vitro, the C-terminal globular tail binds a C-terminal region of DAB2. Interacts with CFTR. Interacts with CABP5. Interacts (via residues 1128-1256) with TOM1 (via residues 392-463). Interacts (via residues 1060-1285) with OPTN. Interacts (via residues 1060-1285) with TAX1BP1 and CALCOCO2/NDP52. Interacts with TOM1L2. Interacts with CLIC5; may work together in a complex which also includes RDX and MYO6 to stabilize linkages between the plasma membrane and subjacent actin cytoskeleton at the base of stereocilia. In terms of processing, phosphorylation in the motor domain, induced by EGF, results in translocation of MYO6 from the cell surface to membrane ruffles and affects F-actin dynamics. Phosphorylated in vitro by p21-activated kinase (PAK). Within the cochlea, expressed specifically within the sensory hair cells (at protein level). Expressed in the inner and outer plexiform layer of the retina (at protein level). Widely expressed. Expressed in the brain, kidney, liver, and testis.

The protein resides in the golgi apparatus. The protein localises to the trans-Golgi network membrane. It is found in the nucleus. It localises to the cytoplasm. Its subcellular location is the perinuclear region. The protein resides in the membrane. The protein localises to the clathrin-coated pit. It is found in the cytoplasmic vesicle. It localises to the clathrin-coated vesicle. Its subcellular location is the cell projection. The protein resides in the filopodium. The protein localises to the ruffle membrane. It is found in the microvillus. It localises to the cytosol. Functionally, myosins are actin-based motor molecules with ATPase activity. Unconventional myosins serve in intracellular movements. Myosin 6 is a reverse-direction motor protein that moves towards the minus-end of actin filaments. Has slow rate of actin-activated ADP release due to weak ATP binding. Functions in a variety of intracellular processes such as vesicular membrane trafficking and cell migration. Required for the structural integrity of the Golgi apparatus via the p53-dependent pro-survival pathway. Appears to be involved in a very early step of clathrin-mediated endocytosis in polarized epithelial cells. Together with TOM1, mediates delivery of endocytic cargo to autophagosomes thereby promoting autophagosome maturation and driving fusion with lysosomes. Links TOM1 with autophagy receptors, such as TAX1BP1; CALCOCO2/NDP52 and OPTN. May act as a regulator of F-actin dynamics. As part of the DISP complex, may regulate the association of septins with actin and thereby regulate the actin cytoskeleton. May play a role in transporting DAB2 from the plasma membrane to specific cellular targets. May play a role in the extension and network organization of neurites. Required for structural integrity of inner ear hair cells. Required for the correct localization of CLIC5 and RDX at the stereocilium base. Modulates RNA polymerase II-dependent transcription. In Mus musculus (Mouse), this protein is Unconventional myosin-VI (Myo6).